A 343-amino-acid chain; its full sequence is MAKRQLTRRQSWRIEKIQEERAARAAKRESRAVEELEGGDLGPEQNGLVIAHFGVQVEVEAEDGELAGQVCRCHLRANLPALVTGDRVVWRAGNQGGGVIVAQLPRRSELCRPDMRGQLKPVAANVDRIVIVFAPLPEPHANLIDRYLVAAEHAGIRPLLLLNKADLVNEENAAGLDALLATYQRLGYPLLEVSARQGAGMQELQAALDGHVSVFVGQSGVGKSSLVNSLLPGVDTRVGALSEQTGKGMHTTTTARLFHFPGGGELIDSPGIREFSLGHVRRADVEAGFIEFRDLLGHCRFRDCRHDREPGCALLKALDEGRIQPQRMASYRHILASLPEPEY.

The 160-residue stretch at 116-275 (RGQLKPVAAN…LIDSPGIREF (160 aa)) folds into the CP-type G domain. GTP is bound by residues 163 to 166 (NKAD) and 217 to 225 (GQSGVGKSS). Zn(2+) is bound by residues Cys-299, Cys-304, His-306, and Cys-312.

This sequence belongs to the TRAFAC class YlqF/YawG GTPase family. RsgA subfamily. In terms of assembly, monomer. Associates with 30S ribosomal subunit, binds 16S rRNA. Zn(2+) is required as a cofactor.

The protein resides in the cytoplasm. Its function is as follows. One of several proteins that assist in the late maturation steps of the functional core of the 30S ribosomal subunit. Helps release RbfA from mature subunits. May play a role in the assembly of ribosomal proteins into the subunit. Circularly permuted GTPase that catalyzes slow GTP hydrolysis, GTPase activity is stimulated by the 30S ribosomal subunit. In Azotobacter vinelandii (strain DJ / ATCC BAA-1303), this protein is Small ribosomal subunit biogenesis GTPase RsgA.